A 172-amino-acid polypeptide reads, in one-letter code: NADH-quinone oxidoreductase subunit B (172 aa).

Cysteine 46, cysteine 47, cysteine 111, and cysteine 141 together coordinate [4Fe-4S] cluster.

It belongs to the complex I 20 kDa subunit family. NDH-1 is composed of 14 different subunits. Subunits NuoB, C, D, E, F, and G constitute the peripheral sector of the complex. It depends on [4Fe-4S] cluster as a cofactor.

It is found in the cell membrane. The catalysed reaction is a quinone + NADH + 5 H(+)(in) = a quinol + NAD(+) + 4 H(+)(out). Functionally, NDH-1 shuttles electrons from NADH, via FMN and iron-sulfur (Fe-S) centers, to quinones in the respiratory chain. The immediate electron acceptor for the enzyme in this species is believed to be a menaquinone. Couples the redox reaction to proton translocation (for every two electrons transferred, four hydrogen ions are translocated across the cytoplasmic membrane), and thus conserves the redox energy in a proton gradient. The protein is NADH-quinone oxidoreductase subunit B of Bacillus anthracis (strain A0248).